The sequence spans 150 residues: Ribosomal RNA large subunit methyltransferase H (150 aa).

Residues Ala-100 and 118–123 (LSEMTF) contribute to the S-adenosyl-L-methionine site.

This sequence belongs to the RNA methyltransferase RlmH family. In terms of assembly, homodimer.

The protein resides in the cytoplasm. The catalysed reaction is pseudouridine(1915) in 23S rRNA + S-adenosyl-L-methionine = N(3)-methylpseudouridine(1915) in 23S rRNA + S-adenosyl-L-homocysteine + H(+). Functionally, specifically methylates the pseudouridine at position 1915 (m3Psi1915) in 23S rRNA. This is Ribosomal RNA large subunit methyltransferase H from Helicobacter pylori (strain Shi470).